Consider the following 699-residue polypeptide: DnaJ homolog subfamily C member 14 (699 aa).

Positions 1-230 (MAQKHPGEGG…RHRLGRKRSQ (230 aa)) are disordered. A compositionally biased stretch (pro residues) spans 75 to 84 (HGPPRGPGPP). The span at 86-102 (AEEDPDQSEASSEESGV) shows a compositional bias: acidic residues. The segment covering 117-133 (DGNSSFLSIPSTCNCQG) has biased composition (polar residues). Residues 163–176 (GEDEELEGEYDEEE) are compositionally biased toward acidic residues. The span at 203 to 218 (PAKEDTREGGRRDPRS) shows a compositional bias: basic and acidic residues. Over residues 219–228 (PGRHRLGRKR) the composition is skewed to basic residues. 3 helical membrane-spanning segments follow: residues 251–271 (AGFWWLIELLVLVGEYVETCG), 301–321 (GWAQVMFQFLSQGFCYGAGLF), and 327–347 (LVGALLLLALALLLGCLQLGW). Residues 444–508 (NPFHVLGVEA…ERRKEYEMKR (65 aa)) form the J domain. The interval 655–699 (MSNGNFFAAPQPGPGATAASKPNSTVPKGEAKPKRRKKVRRPFQR) is disordered. The segment covering 662–673 (AAPQPGPGATAA) has biased composition (low complexity). Over residues 687-699 (PKRRKKVRRPFQR) the composition is skewed to basic residues.

Interacts with the FxxxFxxxF motif of DRD1 via its C-terminal domain. Interacts with pestivirus nonstructural protein NS2.

Its subcellular location is the endoplasmic reticulum membrane. In terms of biological role, regulates the export of target proteins, such as DRD1, from the endoplasmic reticulum to the cell surface. Promotes cleavage of pestivirus polyprotein. The sequence is that of DnaJ homolog subfamily C member 14 (DNAJC14) from Bos taurus (Bovine).